Reading from the N-terminus, the 506-residue chain is MEERYLELDRSRKNDFLYPFIFREYIYTFAHDHSLNRSILLENVGYDNKSSLLIVKRLITRMYQQNHLIISANDSNQNLFFRYNKNLYYQMISEGFAVIVEIPFSLRLVSSLDLERSEIVKSHKLRSIHSIFPFLEDKFPHLNYVSDILIPYPIHLEKLVQTLRYWVKDPSSLHLLRLFLHEYWNLNSLIIPKKFITIFIKRNPRFFLFLYNSHVYEYESIFFFLRNQSFHLRSIFLRVLLERIFFYGKIEHFAEVFANDFQAILWLFKDPFMHYVRYQGKSILASKDRPFLMKKWKYYLVNLCQCHFYVWFQPEKIYINSLSKHSLNFLGYLSNVQLNPLVVRSQMLENSFIIDKDSTMKKLDTIVPIIPLIGSLAKTKFCNAVGHPISKPIRADSADSDIIDRFVRICRNLSHYYSGSSKKKSLYRIKYILRLSCVKTLARKHKSTVRAFLKRLGSELLEEFFTEEEQILSLIFPKVSSSSRRLYRGRVWYLDIISINDLANHE.

It belongs to the intron maturase 2 family. MatK subfamily.

The protein localises to the plastid. Its subcellular location is the chloroplast. Its function is as follows. Usually encoded in the trnK tRNA gene intron. Probably assists in splicing its own and other chloroplast group II introns. The polypeptide is Maturase K (Manihot esculenta (Cassava)).